A 377-amino-acid polypeptide reads, in one-letter code: Progesterone receptor (377 aa).

The segment at 1-15 (EASQSPQYSFESLPQ) is modulating, Pro-Rich. The segment at residues 16 to 90 (KICLICGDEA…AGMVLGGRKF (75 aa)) is a DNA-binding region (nuclear receptor). NR C4-type zinc fingers lie at residues 18 to 38 (CLIC…CGSC) and 54 to 78 (CAGR…LRKC). Serine 127 is modified (phosphoserine). The NR LBD domain maps to 130–364 (QDLQLIPPLI…EFPEMMSEVI (235 aa)). Residues 138 to 377 (LINLLMSIEP…LPKILAGMVK (240 aa)) form an AF2; mediates transcriptional activation region.

This sequence belongs to the nuclear hormone receptor family. NR3 subfamily. In terms of assembly, interacts with CUEDC2, SMARD1 and with UNC45A. Interacts with PRMT2. Interacts with NCOA2 and NCOA1. Interacts with KLF9. Interacts with GTF2B. In terms of processing, palmitoylated by ZDHHC7 and ZDHHC21. Palmitoylation is required for plasma membrane targeting and for rapid intracellular signaling via ERK and AKT kinases and cAMP generation.

Its subcellular location is the nucleus. Functionally, the steroid hormones and their receptors are involved in the regulation of eukaryotic gene expression and affect cellular proliferation and differentiation in target tissues. Transcriptional activator of several progesteron-dependent promoters in a variety of cell types. Involved in activation of SRC-dependent MAPK signaling on hormone stimulation. In Ovis aries (Sheep), this protein is Progesterone receptor (PGR).